The sequence spans 187 residues: Hypoxanthine/guanine phosphoribosyltransferase (187 aa).

It belongs to the purine/pyrimidine phosphoribosyltransferase family. Archaeal HPRT subfamily. As to quaternary structure, homodimer.

The protein resides in the cytoplasm. The catalysed reaction is IMP + diphosphate = hypoxanthine + 5-phospho-alpha-D-ribose 1-diphosphate. It catalyses the reaction GMP + diphosphate = guanine + 5-phospho-alpha-D-ribose 1-diphosphate. It participates in purine metabolism; IMP biosynthesis via salvage pathway; IMP from hypoxanthine: step 1/1. Functionally, catalyzes a salvage reaction resulting in the formation of IMP that is energically less costly than de novo synthesis. This chain is Hypoxanthine/guanine phosphoribosyltransferase, found in Methanocorpusculum labreanum (strain ATCC 43576 / DSM 4855 / Z).